The following is a 373-amino-acid chain: T-protein (373 aa).

The 90-residue stretch at 1 to 90 (MVAELTALRD…ESYTSENDKG (90 aa)) folds into the Chorismate mutase domain. In terms of domain architecture, Prephenate/arogenate dehydrogenase spans 99-361 (RPVVIVGGKG…DHAKRFLVES (263 aa)).

The protein in the C-terminal section; belongs to the prephenate/arogenate dehydrogenase family.

It is found in the cytoplasm. The catalysed reaction is chorismate = prephenate. It carries out the reaction prephenate + NAD(+) = 3-(4-hydroxyphenyl)pyruvate + CO2 + NADH. It functions in the pathway amino-acid biosynthesis; L-tyrosine biosynthesis; (4-hydroxyphenyl)pyruvate from prephenate (NAD(+) route): step 1/1. It participates in metabolic intermediate biosynthesis; prephenate biosynthesis; prephenate from chorismate: step 1/1. The protein is T-protein (tyrA) of Enterobacter agglomerans (Erwinia herbicola).